A 1644-amino-acid chain; its full sequence is Terminal uridylyltransferase 4 (1644 aa).

Disordered regions lie at residues 30–60 (SNQTLKPRNDKSEIGTSSLNRNSSKKTKQND) and 75–277 (AASV…EMDY). Ser-102 is modified (phosphoserine). Residues 108 to 123 (KGSSQTKLEKTPSLQT) are compositionally biased toward polar residues. A Phosphoserine modification is found at Ser-131. Polar residues-rich tracts occupy residues 146-156 (AEATTEKALNS) and 163-174 (TPTSQMKLQKTP). Residue Ser-176 is modified to Phosphoserine. Polar residues-rich tracts occupy residues 194-209 (QTESQQTGKKLTSSFV) and 226-242 (LENSSLSQKQQTQTDNI). Basic and acidic residues predominate over residues 258 to 272 (DLSKMKSEESNKENS). Residues 273 to 353 (SEMDYLENAT…KEKRHKKNIL (81 aa)) form a required for interaction with LIN28A and pre-let-7 RNA region. Zn(2+) contacts are provided by Cys-326, Cys-329, His-342, and His-348. The span at 603–623 (IADENKAKADEPKDDTKKTET) shows a compositional bias: basic and acidic residues. Positions 603-640 (IADENKAKADEPKDDTKKTETDNQSNAAKAKHGKSPLT) are disordered. In terms of domain architecture, PAP-associated 1 spans 649 to 698 (LGQLWLELLKFYTLDFALEEYVICVRIQDILTRENKNWPKRRIAIEDPFS). Disordered regions lie at residues 733-759 (KGGNKSTMDPKKKEKGKLSSKKPVKSD) and 812-841 (HGQDSSSLSTASGGSDLKQKSAEKQGDLTP). Basic residues predominate over residues 745 to 755 (KEKGKLSSKKP). Positions 815–827 (DSSSLSTASGGSD) are enriched in low complexity. The segment covering 828–837 (LKQKSAEKQG) has biased composition (basic and acidic residues). Residues 918–1634 (DKFILTSGKP…CATRRCRERC (717 aa)) are sufficient for monouridylation activity. A CCHC-type 1 zinc finger spans residues 930-947 (IVCSICKKDGHSKNDCPE). UTP contacts are provided by residues 1015-1018 (SSKN), 1025-1028 (SDLD), Asn-1098, Lys-1120, 1138-1142 (SYAYI), and His-1254. The Mg(2+) site is built by Asp-1026 and Asp-1028. Residues 1201–1254 (SLGELWLGLLRFYTEEFDFKEYVISIRQKKLLTTFEKQWTSKCIAIEDPFDLNH) enclose the PAP-associated 2 domain. Residues 1310–1327 (RCCRVCGKIGHYMKDCPK) form a CCHC-type 2 zinc finger. A disordered region spans residues 1329–1350 (KRLKKKDSEEEKEGNEEEKDSR). The segment at 1358 to 1375 (LRCFICGDAGHVRRECPE) adopts a CCHC-type 3 zinc-finger fold. Positions 1402-1427 (AGSAQQQSDQSIRTRQSSECSDSPSY) are enriched in low complexity. Residues 1402–1483 (AGSAQQQSDQ…LYNFPQSPPA (82 aa)) are disordered. A compositionally biased stretch (pro residues) spans 1428-1450 (SPQPQPFPQNSPQPSALPPPPSQ). Positions 1451–1473 (PGSQPKLGPPQQGGQPPHQVQMP) are enriched in low complexity. Omega-N-methylarginine is present on Arg-1624.

This sequence belongs to the DNA polymerase type-B-like family. As to quaternary structure, interacts with LIN28A in the presence of pre-let-7 RNA. Interacts with T2BP. Interacts with MOV10; the interaction is RNA-dependent. Mg(2+) is required as a cofactor. The cofactor is Mn(2+). As to expression, ubiquitously expressed.

It is found in the nucleus. The protein resides in the cytoplasm. Its subcellular location is the cytoplasmic ribonucleoprotein granule. The catalysed reaction is RNA(n) + UTP = RNA(n)-3'-uridine ribonucleotide + diphosphate. Functionally, uridylyltransferase that mediates the terminal uridylation of mRNAs with short (less than 25 nucleotides) poly(A) tails, hence facilitating global mRNA decay. Essential for both oocyte maturation and fertility. Through 3' terminal uridylation of mRNA, sculpts, with TUT7, the maternal transcriptome by eliminating transcripts during oocyte growth. Involved in microRNA (miRNA)-induced gene silencing through uridylation of deadenylated miRNA targets. Also functions as an integral regulator of microRNA biogenesiS using 3 different uridylation mechanisms. Acts as a suppressor of miRNA biogenesis by mediating the terminal uridylation of some miRNA precursors, including that of let-7 (pre-let-7), miR107, miR-143 and miR-200c. Uridylated miRNAs are not processed by Dicer and undergo degradation. Degradation of pre-let-7 contributes to the maintenance of embryonic stem (ES) cell pluripotency. Also catalyzes the 3' uridylation of miR-26A, a miRNA that targets IL6 transcript. This abrogates the silencing of IL6 transcript, hence promoting cytokine expression. In the absence of LIN28A, TUT7 and TUT4 monouridylate group II pre-miRNAs, which includes most of pre-let7 members, that shapes an optimal 3' end overhang for efficient processing. Add oligo-U tails to truncated pre-miRNAS with a 5' overhang which may promote rapid degradation of non-functional pre-miRNA species. May also suppress Toll-like receptor-induced NF-kappa-B activation via binding to T2BP. Does not play a role in replication-dependent histone mRNA degradation. Due to functional redundancy between TUT4 and TUT7, the identification of the specific role of each of these proteins is difficult. TUT4 and TUT7 restrict retrotransposition of long interspersed element-1 (LINE-1) in cooperation with MOV10 counteracting the RNA chaperonne activity of L1RE1. TUT7 uridylates LINE-1 mRNAs in the cytoplasm which inhibits initiation of reverse transcription once in the nucleus, whereas uridylation by TUT4 destabilizes mRNAs in cytoplasmic ribonucleoprotein granules. This chain is Terminal uridylyltransferase 4, found in Mus musculus (Mouse).